The chain runs to 256 residues: Thiazole synthase (256 aa).

K91 (schiff-base intermediate with DXP) is an active-site residue. Residues G152, 179 to 180 (AG), and 201 to 202 (NT) contribute to the 1-deoxy-D-xylulose 5-phosphate site.

The protein belongs to the ThiG family. In terms of assembly, homotetramer. Forms heterodimers with either ThiH or ThiS.

It localises to the cytoplasm. The enzyme catalyses [ThiS sulfur-carrier protein]-C-terminal-Gly-aminoethanethioate + 2-iminoacetate + 1-deoxy-D-xylulose 5-phosphate = [ThiS sulfur-carrier protein]-C-terminal Gly-Gly + 2-[(2R,5Z)-2-carboxy-4-methylthiazol-5(2H)-ylidene]ethyl phosphate + 2 H2O + H(+). Its pathway is cofactor biosynthesis; thiamine diphosphate biosynthesis. Its function is as follows. Catalyzes the rearrangement of 1-deoxy-D-xylulose 5-phosphate (DXP) to produce the thiazole phosphate moiety of thiamine. Sulfur is provided by the thiocarboxylate moiety of the carrier protein ThiS. In vitro, sulfur can be provided by H(2)S. This Erwinia tasmaniensis (strain DSM 17950 / CFBP 7177 / CIP 109463 / NCPPB 4357 / Et1/99) protein is Thiazole synthase.